The chain runs to 705 residues: Probable iron-sulfur-binding oxidoreductase FadF (705 aa).

6 helical membrane-spanning segments follow: residues 4 to 24 (FLIANALLFLIVTAYAVYLFV), 71 to 91 (IIHVMFFYGFILVQFGAIDFI), 109 to 129 (AFTFFQEIVTFLILIAVGWAF), 146 to 166 (AGLVLIFIGGLMLTVLLGNGM), 173 to 193 (HGLSWSEPIASGIAFMLSGVG), and 199 to 219 (VIFYIAWWIHLLFLLSFLVYV). 4Fe-4S ferredoxin-type domains follow at residues 268 to 298 (QSQLLDLYACVECGRCTNMCPATGTGKMLSP) and 360 to 391 (GDVITEEEIWACTTCRNCEDQCPVMNEHVDKI). Cysteine 277, cysteine 280, cysteine 283, cysteine 287, cysteine 371, cysteine 374, cysteine 377, and cysteine 381 together coordinate [4Fe-4S] cluster.

The cofactor is [4Fe-4S] cluster.

It localises to the cell membrane. The chain is Probable iron-sulfur-binding oxidoreductase FadF (fadF) from Bacillus subtilis (strain 168).